The primary structure comprises 715 residues: Lactococcin transport/processing ATP-binding protein LcnC-like (715 aa).

The Peptidase C39 domain maps to 11 to 138; it reads QVDEMDCGCA…SEWTGISLFL (128 aa). Cys17 is an active-site residue. 5 consecutive transmembrane segments (helical) span residues 167–187, 197–217, 237–257, 282–302, and 307–327; these read VILNIVIASFIVTLINILGSY, IPNALMGTLGIISVGLLLTYI, LAIDVILSYIRHIFQLPMSFF, TILSLFLDLTIVLMTGLILGL, and LFLLVLLAIPLYIVVIIIFTP. The 283-residue stretch at 168–450 folds into the ABC transmembrane type-1 domain; the sequence is ILNIVIASFI…IINLQTKLQK (283 aa). An ABC transporter domain is found at 482–715; it reads LNMSEISYQY…NGFYAQLYHN (234 aa). 515–522 provides a ligand contact to ATP; that stretch reads GISGSGKS.

Belongs to the ABC transporter superfamily. HlyB family.

The protein localises to the cell membrane. Functionally, involved in the export process of a bacteriocin lactococcin. In Lactococcus lactis subsp. lactis (strain IL1403) (Streptococcus lactis), this protein is Lactococcin transport/processing ATP-binding protein LcnC-like (lcnC).